A 221-amino-acid polypeptide reads, in one-letter code: MSRYRGARLRIVRQFDLKQTLRGLTRKRTDNRCMPGQHRKKRNDSTKKTKNSKKVAQYQIRLQEKQKLRFNYGITESQLINYVRQARKTKGSTGETLLQLLEMRLDNIVFRLGMAPTIPAARQLVNHGHIVVNNKKVDISSYQCQSQDVISVTKNKTIRTLISNFINSKTPKNLLRNPQIPSHLIFNKSTLLGTIKSVVPRRWIGLKIKELLIVEFYSRKA.

The disordered stretch occupies residues 26 to 53 (RKRTDNRCMPGQHRKKRNDSTKKTKNSK). Basic residues predominate over residues 37–53 (QHRKKRNDSTKKTKNSK). In terms of domain architecture, S4 RNA-binding spans 103-161 (MRLDNIVFRLGMAPTIPAARQLVNHGHIVVNNKKVDISSYQCQSQDVISVTKNKTIRTL).

It belongs to the universal ribosomal protein uS4 family. Part of the 30S ribosomal subunit. Contacts protein S5. The interaction surface between S4 and S5 is involved in control of translational fidelity.

It localises to the plastid. The protein localises to the chloroplast. Its function is as follows. One of the primary rRNA binding proteins, it binds directly to 16S rRNA where it nucleates assembly of the body of the 30S subunit. Functionally, with S5 and S12 plays an important role in translational accuracy. This is Small ribosomal subunit protein uS4c (rps4) from Pleurastrum terricola (Filamentous green alga).